A 528-amino-acid polypeptide reads, in one-letter code: Putative galacturonosyltransferase 2 (528 aa).

Belongs to the glycosyltransferase 8 family.

It participates in glycan metabolism; pectin biosynthesis. In terms of biological role, may be involved in pectin and/or xylans biosynthesis in cell walls. The chain is Putative galacturonosyltransferase 2 (GAUT2) from Arabidopsis thaliana (Mouse-ear cress).